The sequence spans 308 residues: MRKVIICSPRGFCAGVIRAVQTVERALEKWGAPIYVKHEIVHNRHVVDKLRAKGAIFIEDLQEVPCNSRVIYSAHGVPPSVREEAKERGLITIDATCGLVTKIHSAVKMYARRGYLIILIGKRKHVEVIGICGEAPDKITVVENIAEVEALTFSTKDLLFYVTQTTLSMDDSADMIAALKARYPQIITLPSSSICYATQNRQSALRNILPKVEFVYVIGDPKSSNSNQLKAVAARRGVVARLVNNPEEITDEILQYSGNIGVTAGASTPEDVVQACLTKLQKLIPTLVVETDLFVEEDTIFQLPKELQ.

Residue C13 coordinates [4Fe-4S] cluster. 2 residues coordinate (2E)-4-hydroxy-3-methylbut-2-enyl diphosphate: H42 and H75. Positions 42 and 75 each coordinate dimethylallyl diphosphate. Isopentenyl diphosphate-binding residues include H42 and H75. C97 serves as a coordination point for [4Fe-4S] cluster. Position 125 (H125) interacts with (2E)-4-hydroxy-3-methylbut-2-enyl diphosphate. H125 contributes to the dimethylallyl diphosphate binding site. Residue H125 coordinates isopentenyl diphosphate. E127 functions as the Proton donor in the catalytic mechanism. Residue T165 coordinates (2E)-4-hydroxy-3-methylbut-2-enyl diphosphate. A [4Fe-4S] cluster-binding site is contributed by C195. The (2E)-4-hydroxy-3-methylbut-2-enyl diphosphate site is built by S223, S224, N225, and S267. Residues S223, S224, N225, and S267 each contribute to the dimethylallyl diphosphate site. S223, S224, N225, and S267 together coordinate isopentenyl diphosphate.

It belongs to the IspH family. The cofactor is [4Fe-4S] cluster.

The catalysed reaction is isopentenyl diphosphate + 2 oxidized [2Fe-2S]-[ferredoxin] + H2O = (2E)-4-hydroxy-3-methylbut-2-enyl diphosphate + 2 reduced [2Fe-2S]-[ferredoxin] + 2 H(+). The enzyme catalyses dimethylallyl diphosphate + 2 oxidized [2Fe-2S]-[ferredoxin] + H2O = (2E)-4-hydroxy-3-methylbut-2-enyl diphosphate + 2 reduced [2Fe-2S]-[ferredoxin] + 2 H(+). Its pathway is isoprenoid biosynthesis; dimethylallyl diphosphate biosynthesis; dimethylallyl diphosphate from (2E)-4-hydroxy-3-methylbutenyl diphosphate: step 1/1. It functions in the pathway isoprenoid biosynthesis; isopentenyl diphosphate biosynthesis via DXP pathway; isopentenyl diphosphate from 1-deoxy-D-xylulose 5-phosphate: step 6/6. Its function is as follows. Catalyzes the conversion of 1-hydroxy-2-methyl-2-(E)-butenyl 4-diphosphate (HMBPP) into a mixture of isopentenyl diphosphate (IPP) and dimethylallyl diphosphate (DMAPP). Acts in the terminal step of the DOXP/MEP pathway for isoprenoid precursor biosynthesis. The sequence is that of 4-hydroxy-3-methylbut-2-enyl diphosphate reductase from Chlamydia muridarum (strain MoPn / Nigg).